Here is a 794-residue protein sequence, read N- to C-terminus: Signal transducer and activator of transcription 5A (794 aa).

Tyrosine 90 carries the post-translational modification Phosphotyrosine. Serine 128 and serine 193 each carry phosphoserine. An SH2 domain is found at 589-686 (WNDGAILGFV…EVFSKYYTPV (98 aa)). Tyrosine 682 is subject to Phosphotyrosine. Position 694 is a phosphotyrosine; by JAK2 (tyrosine 694). The interval 773–794 (DSLDSRLSPPAGLFTSARGSLS) is disordered. A Phosphoserine modification is found at serine 780.

It belongs to the transcription factor STAT family. In terms of assembly, forms a homodimer or a heterodimer with a related family member. Binds NR3C1. Interacts with NCOA1 and SOCS7. Interacts with ERBB4. Interacts with EBF4. Interacts with CD69. Post-translationally, tyrosine phosphorylated in response to KITLG/SCF, IL2, IL3, IL7, IL15, CSF2/GMCSF, GH1, PRL, EPO and THPO. Activated KIT promotes phosphorylation on tyrosine residues and subsequent translocation to the nucleus. Tyrosine phosphorylated in response to constitutively activated FGFR1, FGFR2, FGFR3 and FGFR4. Tyrosine phosphorylation is required for DNA-binding activity and dimerization. Serine phosphorylation is also required for maximal transcriptional activity. Tyrosine phosphorylated in response to signaling via activated FLT3; wild-type FLT3 results in much weaker phosphorylation than constitutively activated mutant FLT3. Alternatively, can be phosphorylated by JAK2 at Tyr-694. ISGylated.

It localises to the cytoplasm. The protein localises to the nucleus. Carries out a dual function: signal transduction and activation of transcription. Mediates cellular responses to the cytokine KITLG/SCF and other growth factors. Mediates cellular responses to ERBB4. May mediate cellular responses to activated FGFR1, FGFR2, FGFR3 and FGFR4. Binds to the GAS element and activates PRL-induced transcription. Regulates the expression of milk proteins during lactation. This Homo sapiens (Human) protein is Signal transducer and activator of transcription 5A (STAT5A).